The sequence spans 501 residues: MLTPRVLRALGWTGLFFLLLSPSNVLGASLSRDLETPPFLSFDPSNISINGAPLTEVPHAPSTESVSTNSESTNEHTITETTGKNAYIHNNASTDKQNANDTHKMPNILCDTEEVFVFLNETGRFVCTLKVDPPSDSEWSNFVLDLIFNPIEYHANEKNVEAARIAGLYGVPGSDYAYPRQSELISSIRRDPQGTFWTSPSPHGNKYFIWINKTTNTMGVEIRNVDYADNGYMQVIMRDHFNRPLIDKHIYIRVCQRPASVDVLAPPVLSGENYKASCIVRHFYPPGSVYVSWRQNGNIATPRKDRDGSFWWFESGRGATLVSTITLGNSGIDFPPKISCLVAWKQGDMISTTNATAIPTVYHHPRLSLAFKDGYAICTIECVPSEITVRWLVHDEAQPNTTYNTVVTGLCRTIDRHRNLLSRIPVWDNWTKTKYTCRLIGYPFDEDKFQDSEYYDATPSARGTPMVITVTAVLGLAVILGMGIIMTALCLYNSTRKNIRL.

The signal sequence occupies residues 1-27 (MLTPRVLRALGWTGLFFLLLSPSNVLG). Over 28 to 465 (ASLSRDLETP…DATPSARGTP (438 aa)) the chain is Virion surface. N-linked (GlcNAc...) asparagine; by host glycosylation is present at asparagine 46. The disordered stretch occupies residues 53 to 87 (PLTEVPHAPSTESVSTNSESTNEHTITETTGKNAY). Low complexity predominate over residues 62–72 (STESVSTNSES). N-linked (GlcNAc...) asparagine; by host glycosylation is found at asparagine 91, asparagine 100, asparagine 120, asparagine 212, asparagine 354, asparagine 400, and asparagine 429. The region spanning 258 to 356 (PASVDVLAPP…GDMISTTNAT (99 aa)) is the Ig-like domain. The helical transmembrane segment at 466–492 (MVITVTAVLGLAVILGMGIIMTALCLY) threads the bilayer. The Cytoplasmic segment spans residues 493–501 (NSTRKNIRL).

It belongs to the herpesviridae glycoprotein C family.

It localises to the secreted. Its subcellular location is the host cell membrane. In terms of biological role, may play an immunoevasive role in the pathogenesis of Marek's disease. It is a candidate for causing the early-stage immunosuppression that occurs after MDHV infection. The sequence is that of Envelope glycoprotein C homolog (gC) from Gallus gallus (Chicken).